The primary structure comprises 354 residues: Ribosomal RNA large subunit methyltransferase M (354 aa).

S-adenosyl-L-methionine-binding positions include Ser-183, 216 to 219 (SPGG), Asp-235, Asp-255, and Asp-271. The active-site Proton acceptor is Lys-300.

The protein belongs to the class I-like SAM-binding methyltransferase superfamily. RNA methyltransferase RlmE family. RlmM subfamily. In terms of assembly, monomer.

It localises to the cytoplasm. It carries out the reaction cytidine(2498) in 23S rRNA + S-adenosyl-L-methionine = 2'-O-methylcytidine(2498) in 23S rRNA + S-adenosyl-L-homocysteine + H(+). Functionally, catalyzes the 2'-O-methylation at nucleotide C2498 in 23S rRNA. The chain is Ribosomal RNA large subunit methyltransferase M from Pseudomonas entomophila (strain L48).